The sequence spans 819 residues: Metabotropic glutamate receptor-like protein O (819 aa).

Positions 1–19 are cleaved as a signal peptide; the sequence is MKKVFFLILILNCVVGALS. Over 20-394 the chain is Extracellular; it reads NKNICKISLL…FVDSYSNSIK (375 aa). N-linked (GlcNAc...) asparagine glycans are attached at residues N99, N185, N277, N295, N330, and N370. Residues 395 to 415 traverse the membrane as a helical segment; sequence ISILSVSIFCIFICVLGMIFI. Over 416–428 the chain is Cytoplasmic; that stretch reads TVLRNARILKSSS. The helical transmembrane segment at 429 to 449 threads the bilayer; sequence PSFLLLILFGCIVIFTGCILF. The Extracellular portion of the chain corresponds to 450–457; sequence SQPATDKT. Residues 458–478 form a helical membrane-spanning segment; it reads CQGRVWLLSIGYTIFLGSLLI. Topologically, residues 479-503 are cytoplasmic; sequence KNWRVWLLFDNKKLRKRSITNWKLY. Residues 504–524 traverse the membrane as a helical segment; that stretch reads PWVAGILVVDVLILALWQGLG. Topologically, residues 525-550 are extracellular; it reads DIKSESRIIGTSFYQYTNVCTNNDQG. A helical transmembrane segment spans residues 551-571; that stretch reads SIALYILLAFHGLKLLGTCFI. At 572–587 the chain is on the cytoplasmic side; sequence SFKIKLVDIEEFNESK. Residues 588-608 traverse the membrane as a helical segment; the sequence is PITTSVFIILFCIFTIILLIA. Topologically, residues 609 to 624 are extracellular; the sequence is PSSSSSSASSPQPIAS. A helical membrane pass occupies residues 625 to 645; sequence LETIICICSVTTTAISIGLLF. The Cytoplasmic portion of the chain corresponds to 646 to 819; sequence GDKIYFITTQ…NNENEIISDT (174 aa). The segment at 674–819 is disordered; the sequence is KDCDDDDDDS…NNENEIISDT (146 aa). A compositionally biased stretch (basic residues) spans 695–712; it reads NKNKNKNRNQSEKKKRPN. Positions 726–739 are enriched in polar residues; sequence ESVVFNPPSNNDLT. A compositionally biased stretch (basic and acidic residues) spans 748 to 768; that stretch reads GIKEGHGHDSENNDEYEHHED. Positions 769–798 are enriched in acidic residues; sequence EDHEYEGEGEDEDHEDEYEVENDIEQEQEQ. Positions 799–808 are enriched in low complexity; sequence ESSNISISTK.

This sequence in the N-terminal section; belongs to the BMP lipoprotein family. The protein in the C-terminal section; belongs to the G-protein coupled receptor 3 family. GABA-B receptor subfamily.

The protein localises to the membrane. This Dictyostelium discoideum (Social amoeba) protein is Metabotropic glutamate receptor-like protein O (grlO).